The chain runs to 707 residues: Polyribonucleotide nucleotidyltransferase (707 aa).

Asp-488 and Asp-494 together coordinate Mg(2+). One can recognise a KH domain in the interval Pro-555–Ile-615. The S1 motif domain occupies Gly-625–Val-692.

This sequence belongs to the polyribonucleotide nucleotidyltransferase family. Mg(2+) is required as a cofactor.

Its subcellular location is the cytoplasm. It carries out the reaction RNA(n+1) + phosphate = RNA(n) + a ribonucleoside 5'-diphosphate. Its function is as follows. Involved in mRNA degradation. Catalyzes the phosphorolysis of single-stranded polyribonucleotides processively in the 3'- to 5'-direction. This is Polyribonucleotide nucleotidyltransferase from Thermotoga neapolitana (strain ATCC 49049 / DSM 4359 / NBRC 107923 / NS-E).